Consider the following 425-residue polypeptide: Kynurenine/alpha-aminoadipate aminotransferase, mitochondrial (425 aa).

The transit peptide at 1 to 29 (MNYSRFLTATSLARKTSPIRATVEIMSRA) directs the protein to the mitochondrion. Arginine 20 lines the substrate pocket. At serine 40 the chain carries Phosphoserine. Substrate contacts are provided by tyrosine 74 and tyrosine 142. At lysine 172 the chain carries N6-succinyllysine. An N6-acetyllysine modification is found at lysine 179. A compositionally biased stretch (basic and acidic residues) spans 179-188 (KPEDSKDPTK). Residues 179 to 208 (KPEDSKDPTKRTPKFLYTIPNGNNPTGNSL) form a disordered region. Positions 198-208 (PNGNNPTGNSL) are enriched in polar residues. Asparagine 202 provides a ligand contact to substrate. At lysine 263 the chain carries N6-(pyridoxal phosphate)lysine; alternate. 2 positions are modified to N6-acetyllysine; alternate: lysine 263 and lysine 339. 2 positions are modified to N6-succinyllysine; alternate: lysine 263 and lysine 339. Lysine 351 is modified (N6-acetyllysine). Lysine 367 is subject to N6-acetyllysine; alternate. The residue at position 367 (lysine 367) is an N6-succinyllysine; alternate. Arginine 399 contributes to the substrate binding site. Residue lysine 422 is modified to N6-acetyllysine.

The protein belongs to the class-I pyridoxal-phosphate-dependent aminotransferase family. As to quaternary structure, homodimer. It depends on pyridoxal 5'-phosphate as a cofactor. In terms of processing, the N-terminus is blocked.

The protein resides in the mitochondrion. The catalysed reaction is L-kynurenine + 2-oxoglutarate = kynurenate + L-glutamate + H2O. The enzyme catalyses L-2-aminoadipate + 2-oxoglutarate = 2-oxoadipate + L-glutamate. It carries out the reaction glycine + 2-oxoglutarate = glyoxylate + L-glutamate. It catalyses the reaction L-kynurenine + glyoxylate = kynurenate + glycine + H2O. The catalysed reaction is 3-hydroxy-L-kynurenine + glyoxylate = xanthurenate + glycine + H2O. The enzyme catalyses 2-oxohexanoate + L-kynurenine = L-2-aminohexanoate + kynurenate + H2O. It carries out the reaction 3-phenylpyruvate + L-kynurenine = kynurenate + L-phenylalanine + H2O. It catalyses the reaction 4-methylsulfanyl-2-oxobutanoate + L-kynurenine = kynurenate + L-methionine + H2O. The catalysed reaction is 2-oxo-3-sulfanylpropanoate + L-kynurenine = kynurenate + L-cysteine + H2O. The enzyme catalyses indole-3-pyruvate + L-kynurenine = kynurenate + L-tryptophan + H2O. It carries out the reaction 2-oxopentanoate + L-kynurenine = L-2-aminopentanoate + kynurenate + H2O. It catalyses the reaction 4-methyl-2-oxopentanoate + L-kynurenine = kynurenate + L-leucine + H2O. The catalysed reaction is glyoxylate + L-methionine = 4-methylsulfanyl-2-oxobutanoate + glycine. The enzyme catalyses L-2-aminoadipate + glyoxylate = 2-oxoadipate + glycine. It carries out the reaction L-tyrosine + glyoxylate = 3-(4-hydroxyphenyl)pyruvate + glycine. It catalyses the reaction glyoxylate + L-phenylalanine = 3-phenylpyruvate + glycine. The catalysed reaction is L-tryptophan + glyoxylate = indole-3-pyruvate + glycine. The enzyme catalyses L-leucine + glyoxylate = 4-methyl-2-oxopentanoate + glycine. It carries out the reaction 2-oxobutanoate + L-kynurenine = (2S)-2-aminobutanoate + kynurenate + H2O. It catalyses the reaction 2-oxoadipate + L-kynurenine = L-2-aminoadipate + kynurenate + H2O. The catalysed reaction is 2-oxoadipate + L-kynurenine = 4-(2-aminophenyl)-2,4-dioxobutanoate + L-2-aminoadipate. The protein operates within amino-acid degradation; L-lysine degradation via saccharopine pathway; glutaryl-CoA from L-lysine: step 4/6. Its function is as follows. Transaminase with broad substrate specificity. Has transaminase activity towards aminoadipate, kynurenine, methionine and glutamate. Shows activity also towards tryptophan, aspartate and hydroxykynurenine. Accepts a variety of oxo-acids as amino-group acceptors, with a preference for 2-oxoglutarate, 2-oxocaproic acid, phenylpyruvate and alpha-oxo-gamma-methiol butyric acid. Can also use glyoxylate as amino-group acceptor (in vitro). This chain is Kynurenine/alpha-aminoadipate aminotransferase, mitochondrial, found in Rattus norvegicus (Rat).